Here is a 209-residue protein sequence, read N- to C-terminus: FAS-associated death domain protein (209 aa).

Residues 3 to 81 (PFLVLLHSVS…RKDLLLRLDD (79 aa)) enclose the DED domain. The region spanning 97-181 (LRAAMEIICD…VVADLIEEDQ (85 aa)) is the Death domain. Over residues 187–200 (QSGSANPGSFTAWD) the composition is skewed to polar residues. Positions 187–209 (QSGSANPGSFTAWDSGSAAPGAS) are disordered.

In terms of assembly, can self-associate. Component of the AIM2 PANoptosome complex, a multiprotein complex that drives inflammatory cell death (PANoptosis). Component of the death-induced signaling complex (DISC) composed of cell surface receptor FAS/CD95 or TNFRSF1A, adapter protein FADD and the CASP8 protease; recruitment of CASP8 to the complex is required for processing of CASP8 into the p18 and p10 subunits. Interacts (via death domain) with FAS (via death domain). Interacts directly (via DED domain) with NOL3 (via CARD domain); inhibits death-inducing signaling complex (DISC) assembly by inhibiting the increase in FAS-FADD binding induced by FAS activation. Interacts with CFLAR, PEA15 and MBD4. When phosphorylated, part of a complex containing HIPK3 and FAS. May interact with MAVS/IPS1. Interacts with MOCV v-CFLAR protein and PIDD1. Interacts with RIPK1 and TRADD. Interacts with stimulated TNFRSF10B. Interacts with DDX24. Phosphorylated.

It is found in the cytoplasm. Functionally, apoptotic adapter molecule that recruits caspases CASP8 or CASP10 to the activated FAS/CD95 or TNFRSF1A/TNFR-1 receptors. The resulting aggregate called the death-inducing signaling complex (DISC) performs CASP8 proteolytic activation. Active CASP8 initiates the subsequent cascade of caspases mediating apoptosis. Involved in interferon-mediated antiviral immune response, playing a role in the positive regulation of interferon signaling. The polypeptide is FAS-associated death domain protein (Bos taurus (Bovine)).